The following is a 300-amino-acid chain: Bifunctional protein FolD 1 (300 aa).

Residues 166-168, serine 191, and isoleucine 232 each bind NADP(+); that span reads GRS.

Belongs to the tetrahydrofolate dehydrogenase/cyclohydrolase family. Homodimer.

The enzyme catalyses (6R)-5,10-methylene-5,6,7,8-tetrahydrofolate + NADP(+) = (6R)-5,10-methenyltetrahydrofolate + NADPH. It carries out the reaction (6R)-5,10-methenyltetrahydrofolate + H2O = (6R)-10-formyltetrahydrofolate + H(+). It functions in the pathway one-carbon metabolism; tetrahydrofolate interconversion. In terms of biological role, catalyzes the oxidation of 5,10-methylenetetrahydrofolate to 5,10-methenyltetrahydrofolate and then the hydrolysis of 5,10-methenyltetrahydrofolate to 10-formyltetrahydrofolate. The polypeptide is Bifunctional protein FolD 1 (Roseobacter denitrificans (strain ATCC 33942 / OCh 114) (Erythrobacter sp. (strain OCh 114))).